A 196-amino-acid chain; its full sequence is Pyridoxine/pyridoxamine 5'-phosphate oxidase (196 aa).

FMN contacts are provided by residues 44-49 (RTVLLK), 59-60 (YT), Arg65, Lys66, and Gln88. Lys49 contributes to the substrate binding site. Substrate contacts are provided by Tyr106, Arg110, and Ser114. Residues 123 to 124 (QS) and Trp169 contribute to the FMN site. Residue 175 to 177 (RLH) participates in substrate binding. Residue Arg179 coordinates FMN.

Belongs to the pyridoxamine 5'-phosphate oxidase family. As to quaternary structure, homodimer. It depends on FMN as a cofactor.

The enzyme catalyses pyridoxamine 5'-phosphate + O2 + H2O = pyridoxal 5'-phosphate + H2O2 + NH4(+). It catalyses the reaction pyridoxine 5'-phosphate + O2 = pyridoxal 5'-phosphate + H2O2. Its pathway is cofactor metabolism; pyridoxal 5'-phosphate salvage; pyridoxal 5'-phosphate from pyridoxamine 5'-phosphate: step 1/1. The protein operates within cofactor metabolism; pyridoxal 5'-phosphate salvage; pyridoxal 5'-phosphate from pyridoxine 5'-phosphate: step 1/1. Functionally, catalyzes the oxidation of either pyridoxine 5'-phosphate (PNP) or pyridoxamine 5'-phosphate (PMP) into pyridoxal 5'-phosphate (PLP). The protein is Pyridoxine/pyridoxamine 5'-phosphate oxidase of Alkalilimnicola ehrlichii (strain ATCC BAA-1101 / DSM 17681 / MLHE-1).